The following is a 551-amino-acid chain: Glucans biosynthesis protein D (551 aa).

Residues 1 to 32 (MDRRRFIKGSMAMAAVCGTSGIASLFSQAAFA) constitute a signal peptide (tat-type signal).

It belongs to the OpgD/OpgG family. Post-translationally, predicted to be exported by the Tat system. The position of the signal peptide cleavage has not been experimentally proven.

The protein localises to the periplasm. It functions in the pathway glycan metabolism; osmoregulated periplasmic glucan (OPG) biosynthesis. Probably involved in the control of the structural glucose backbone of osmoregulated periplasmic glucans (OPGs). This is Glucans biosynthesis protein D from Escherichia coli O139:H28 (strain E24377A / ETEC).